The sequence spans 258 residues: Deoxyribose-phosphate aldolase (258 aa).

D101 (proton donor/acceptor) is an active-site residue. K166 (schiff-base intermediate with acetaldehyde) is an active-site residue. The active-site Proton donor/acceptor is K200.

It belongs to the DeoC/FbaB aldolase family. DeoC type 2 subfamily.

It is found in the cytoplasm. It catalyses the reaction 2-deoxy-D-ribose 5-phosphate = D-glyceraldehyde 3-phosphate + acetaldehyde. It functions in the pathway carbohydrate degradation; 2-deoxy-D-ribose 1-phosphate degradation; D-glyceraldehyde 3-phosphate and acetaldehyde from 2-deoxy-alpha-D-ribose 1-phosphate: step 2/2. Its function is as follows. Catalyzes a reversible aldol reaction between acetaldehyde and D-glyceraldehyde 3-phosphate to generate 2-deoxy-D-ribose 5-phosphate. The chain is Deoxyribose-phosphate aldolase from Haemophilus ducreyi (strain 35000HP / ATCC 700724).